Consider the following 176-residue polypeptide: Peptide methionine sulfoxide reductase B3 (176 aa).

The N-terminal stretch at 1–26 (MNIVNSKILFLSFTLLLLLQSSIVES) is a signal peptide. In terms of domain architecture, MsrB spans 51–172 (DEEWRAILSP…NSVSLKFTPA (122 aa)). Zn(2+) contacts are provided by C90, C93, C136, and C139. C108 and C161 form a disulfide bridge. Residue C161 is the Nucleophile of the active site.

This sequence belongs to the MsrB Met sulfoxide reductase family. The cofactor is Zn(2+).

The protein localises to the endoplasmic reticulum. The enzyme catalyses L-methionyl-[protein] + [thioredoxin]-disulfide + H2O = L-methionyl-(R)-S-oxide-[protein] + [thioredoxin]-dithiol. Its function is as follows. Catalyzes the reduction of methionine sulfoxide (MetSO) to methionine in proteins. Plays a protective role against oxidative stress by restoring activity to proteins that have been inactivated by methionine oxidation. Involved in cold tolerance. Eliminates MetSO and reactive oxygen species that accumulate at the ER during cold acclimation. MSRB family specifically reduces the MetSO R-enantiomer. The chain is Peptide methionine sulfoxide reductase B3 (MSRB3) from Arabidopsis thaliana (Mouse-ear cress).